The primary structure comprises 325 residues: Probable cell division protein WhiA (325 aa).

Residues 280–313 (SLKELGSMLKNPLGKSGVNHRLRKIDKIAEELRK) constitute a DNA-binding region (H-T-H motif).

It belongs to the WhiA family.

Its function is as follows. Involved in cell division and chromosome segregation. The polypeptide is Probable cell division protein WhiA (Caldicellulosiruptor saccharolyticus (strain ATCC 43494 / DSM 8903 / Tp8T 6331)).